The following is a 331-amino-acid chain: Vitamin B12 import system permease protein BtuC (331 aa).

Transmembrane regions (helical) follow at residues 20–42, 62–84, 91–113, 117–136, 148–170, 190–209, 240–262, 277–299, and 306–325; these read LLIG…WLSP, LLAA…VLLG, GVVG…FPSL, VAFM…LLVV, LLLV…FYFS, SWYQ…WLVL, LAIA…VGLV, LLLP…IARL, and LPLG…WMLV.

This sequence belongs to the binding-protein-dependent transport system permease family. FecCD subfamily. The complex is composed of two ATP-binding proteins (BtuD), two transmembrane proteins (BtuC) and a solute-binding protein (BtuF).

It is found in the cell inner membrane. Part of the ABC transporter complex BtuCDF involved in vitamin B12 import. Involved in the translocation of the substrate across the membrane. The polypeptide is Vitamin B12 import system permease protein BtuC (Vibrio cholerae serotype O1 (strain ATCC 39315 / El Tor Inaba N16961)).